We begin with the raw amino-acid sequence, 648 residues long: MIKRETQVDQILKDIRGIVNQMVPREAKITEIEFEGPELVIYVKNPEAIMKDGELIKDLAKVLKKRISIRPDPDVLLPPEEAEKLIFEIVPKEAEITNIAFDPSVGEVLIEAKKPGLVIGKNGETLRLITQKVKWAPKVVRTPPLQSQTIYSIRQILQSESKDRRKFLRQVGRNIYRKPEYKSRWIRITGLGGFREVGRSALLVQTDESYVLVDFGVNVAALNDPYKAFPHFDAPEFQYVLKEGLLDAIIITHAHLDHSGMLPYLFRYNLFDGPIYTTPPTRDLMVLLQKDFIEIQQSNGQDPLYRPRDIKEVIKHTITLDYGEVRDISPDIRLTLHNAGHILGSAIVHLHIGNGLHNIAITGDFKFIPTRLLEPANAKFPRLETLVMESTYGGANDIQMPREEAEKRLIEVIHQTLKRGGKVLIPAMAVGRAQEVMMVLEDYARIGAIDAPIYLDGMIWEATAIHTAYPEYLSRRLREQIFKEGYNPFLSEIFHPVANSKERQDIIDSNEPAIIIASSGMLVGGPSVEYFKQLAPDPRNSIIFVSYQAEGTLGRQVQSGVREIPMVGEEGRTEVIKVNMEVHTIDGFSGHADRRELMNYVAKVRPRPERVITVHGEPQKCLDLATSIHRKFGLSTRAPNNLDTIRLR.

Residues 1–179 (MIKRETQVDQ…QVGRNIYRKP (179 aa)) form a not required for dimerization, required for cleavage at some sites region. Residues 9–76 (DQILKDIRGI…ISIRPDPDVL (68 aa)) form a KHa region. Residues 77–144 (LPPEEAEKLI…WAPKVVRTPP (68 aa)) form a KHb region. Residues 185–395 (WIRITGLGGF…LVMESTYGGA (211 aa)) form a metallo-beta-lactamase N-terminus region. Zn(2+) is bound by residues histidine 253, histidine 255, aspartate 257, histidine 258, histidine 341, and aspartate 364. Positions 396–589 (NDIQMPREEA…MEVHTIDGFS (194 aa)) are beta-Casp. Positions 590 to 648 (GHADRRELMNYVAKVRPRPERVITVHGEPQKCLDLATSIHRKFGLSTRAPNNLDTIRLR) are metallo-beta-lactamase C-terminus. Histidine 615 provides a ligand contact to Zn(2+).

Belongs to the metallo-beta-lactamase superfamily. RNA-metabolizing metallo-beta-lactamase-like family. FttA subfamily. Homodimer. Interacts with RNA polymerase (RNAP), interacts with the Spt4-Spt5 complex. Zn(2+) serves as cofactor.

With respect to regulation, endoRNase activity is inhibited by 1,10-phenanthroline. In terms of biological role, terminates transcription on the whole genome. Termination is linked to FttA-mediated RNA cleavage and does not require NTP hydrolysis. Cleaves endonucleolytically at the RNA exit channel of RNA polymerase (RNAP); the 5'-3' exonuclease activity of this protein degrades the nascent RNA released from RNAP. Its function is as follows. A single-stranded endoribonuclease (endoRNase) with a preference for cleavage at CA dinucleotides. Has 5'-3' exoribonuclease (exoRNase) activity on 5'-monophosphorylated RNA; this activity does not occur on 5'-tri-phosphorylated or 5'-OH substrates. Also has weak activity 5'-3' exodeoxyribonuclease activity on ssDNA. The chain is Transcription termination factor FttA from Pyrococcus abyssi (strain GE5 / Orsay).